Consider the following 328-residue polypeptide: Glycerol-3-phosphate dehydrogenase [NAD(P)+] (328 aa).

4 residues coordinate NADPH: Trp-15, His-35, Tyr-51, and Lys-107. Sn-glycerol 3-phosphate-binding residues include Lys-107, Gly-135, and Ser-137. Position 139 (Ala-139) interacts with NADPH. Sn-glycerol 3-phosphate contacts are provided by Lys-190, Asp-243, Ser-253, Arg-254, and Asn-255. Residue Lys-190 is the Proton acceptor of the active site. Arg-254 contributes to the NADPH binding site. The NADPH site is built by Leu-276 and Glu-278.

It belongs to the NAD-dependent glycerol-3-phosphate dehydrogenase family.

The protein resides in the cytoplasm. The enzyme catalyses sn-glycerol 3-phosphate + NAD(+) = dihydroxyacetone phosphate + NADH + H(+). It carries out the reaction sn-glycerol 3-phosphate + NADP(+) = dihydroxyacetone phosphate + NADPH + H(+). It functions in the pathway membrane lipid metabolism; glycerophospholipid metabolism. Functionally, catalyzes the reduction of the glycolytic intermediate dihydroxyacetone phosphate (DHAP) to sn-glycerol 3-phosphate (G3P), the key precursor for phospholipid synthesis. This chain is Glycerol-3-phosphate dehydrogenase [NAD(P)+], found in Rhodopseudomonas palustris (strain BisA53).